Consider the following 206-residue polypeptide: Large ribosomal subunit protein mL40 (206 aa).

The transit peptide at Met-1 to Arg-46 directs the protein to the mitochondrion. Positions Pro-170–Gly-190 are disordered.

This sequence belongs to the mitochondrion-specific ribosomal protein mL40 family. In terms of assembly, component of the mitochondrial ribosome large subunit (39S) which comprises a 16S rRNA and about 50 distinct proteins.

The protein resides in the mitochondrion. This Rattus norvegicus (Rat) protein is Large ribosomal subunit protein mL40 (Mrpl40).